Reading from the N-terminus, the 525-residue chain is Patatin-like protein 8 (525 aa).

The disordered stretch occupies residues 1–50 (MNRRYEKPPPLSVSSKGKKKHFVNHTAPNTPGNYERTQTSPTLSTARSHE). Polar residues predominate over residues 26–46 (TAPNTPGNYERTQTSPTLSTA). The PNPLA domain occupies 124-338 (LSIDGGGMRG…AMSNPTAAAI (215 aa)). The short motif at 128 to 133 (GGGMRG) is the GXGXXG element. S168 acts as the Nucleophile in catalysis.

Belongs to the patatin family. As to expression, specifically expressed in roots.

Possesses non-specific lipolytic acyl hydrolase (LAH) activity. Hydrolyzes phospholipids as well as galactolipids. May play a role in disease resistance. This is Patatin-like protein 8 (PLP8) from Arabidopsis thaliana (Mouse-ear cress).